The sequence spans 695 residues: Calcium-binding acidic-repeat protein (695 aa).

A signal peptide (or 23) is located at residues 1–20 (MSHLWCWLFLVLCLACLVLS). TSP type-3 repeat units follow at residues 24-38 (KDSDGDGLLDVDEIN), 47-56 (ADSDQDGLTD), 70-82 (KDTDDDSIGDGVE), 184-196 (GDSDDDGVSDGAE), 202-214 (KDSDGDGLTDEEE), and 248-260 (GDSDDDGLGDGAE). The disordered stretch occupies residues 45-695 (YNADSDQDGL…TDPWRSDHSV (651 aa)). Residues 59–70 (EVNRHQTHPQDK) show a composition bias toward basic and acidic residues. Acidic residues-rich tracts occupy residues 271–283 (ADSDNDGLDDGEE), 291–306 (PEDPDSDNDGLNDGDE), and 313–324 (DPEEDDSDEDGV). TSP type-3 repeat units lie at residues 294–308 (PDSDNDGLNDGDEVN), 317–329 (DDSDEDGVCDGAE), 340–352 (EDSDNDGIPDGAE), 363–375 (EDSDDDGIADGAE), 379–393 (TDSDGDGLPDEDEVA), 402–414 (ADSDYDGLTDGAE), 425–437 (KDTDDDGLGDGVE), 470–482 (EDTDDDGLTDGAE), 493–505 (ADTDDDGLTDGAE), 516–528 (ADSDGDGLSDGAE), 539–551 (GDSDDDGVPDAAE), 555–569 (KDSDGDGLSDTDEVR), 600–609 (RDTDGDGVAD), 623–635 (ADTDDDGLTDGAE), and 646–658 (ADSDDDGLSDGAE). Composition is skewed to acidic residues over residues 361–370 (NDEDSDDDGI) and 381–392 (SDGDGLPDEDEV). Acidic residues-rich tracts occupy residues 467–477 (PNDEDTDDDGL) and 491–500 (EDADTDDDGL). Positions 537-546 (NDGDSDDDGV) are enriched in acidic residues. Residues 589–603 (EILKHKTDPRNRDTD) are compositionally biased toward basic and acidic residues. The segment covering 665-679 (NAKDGDSDDDGKADG) has biased composition (basic and acidic residues).

It is found in the secreted. It localises to the endoplasmic reticulum. Functionally, may function as a calcium-binding protein. The sequence is that of Calcium-binding acidic-repeat protein from Euglena gracilis.